A 178-amino-acid chain; its full sequence is Large ribosomal subunit protein uL6 (178 aa).

This sequence belongs to the universal ribosomal protein uL6 family. Part of the 50S ribosomal subunit.

This protein binds to the 23S rRNA, and is important in its secondary structure. It is located near the subunit interface in the base of the L7/L12 stalk, and near the tRNA binding site of the peptidyltransferase center. The protein is Large ribosomal subunit protein uL6 of Coxiella burnetii (strain CbuK_Q154) (Coxiella burnetii (strain Q154)).